The sequence spans 603 residues: Myotubularin (603 aa).

A compositionally biased stretch (polar residues) spans 1 to 13 (MASASTSKYNSHS). The segment at 1-25 (MASASTSKYNSHSLENESIKRTSRD) is disordered. 2 positions are modified to phosphoserine: Ser13 and Ser18. Basic and acidic residues predominate over residues 14 to 25 (LENESIKRTSRD). The GRAM domain maps to 29–97 (RDLTEAVPRL…GVISRIEKMG (69 aa)). Residues 163–538 (GWTVYNPVEE…RHLELWVNYY (376 aa)) form the Myotubularin phosphatase domain. Residues Asn288, Asn313, and Ile314 each contribute to the a 1,2-diacyl-sn-glycero-3-phospho-(1D-myo-inositol-3,5-bisphosphate) site. A 1,2-diacyl-sn-glycero-3-phospho-(1D-myo-inositol-3-phosphate)-binding residues include Asn288, Asn313, and Ile314. The active-site Phosphocysteine intermediate is Cys375. 8 residues coordinate a 1,2-diacyl-sn-glycero-3-phospho-(1D-myo-inositol-3,5-bisphosphate): Ser376, Asp377, Gly378, Trp379, Asp380, Arg381, Lys417, and Arg421. Ser376, Asp377, Gly378, Trp379, Asp380, and Arg381 together coordinate a 1,2-diacyl-sn-glycero-3-phospho-(1D-myo-inositol-3-phosphate). An a 1,2-diacyl-sn-glycero-3-phospho-(1D-myo-inositol-3-phosphate)-binding site is contributed by Arg421. Thr495 carries the post-translational modification Phosphothreonine. The interval 579–603 (SAKLSDPPTSPSSPSQMMPHVQTHF) is disordered. Ser588 is subject to Phosphoserine.

It belongs to the protein-tyrosine phosphatase family. Non-receptor class myotubularin subfamily. In terms of assembly, heterodimer with MTMR12. Interacts with KMT2A/MLL1 (via SET domain). Interacts with DES in skeletal muscle but not in cardiac muscle. Interacts with SPEG.

Its subcellular location is the cytoplasm. The protein resides in the cell membrane. It localises to the cell projection. The protein localises to the filopodium. It is found in the ruffle. Its subcellular location is the late endosome. The protein resides in the myofibril. It localises to the sarcomere. The catalysed reaction is a 1,2-diacyl-sn-glycero-3-phospho-(1D-myo-inositol-3-phosphate) + H2O = a 1,2-diacyl-sn-glycero-3-phospho-(1D-myo-inositol) + phosphate. It carries out the reaction a 1,2-diacyl-sn-glycero-3-phospho-(1D-myo-inositol-3,5-bisphosphate) + H2O = a 1,2-diacyl-sn-glycero-3-phospho-(1D-myo-inositol-5-phosphate) + phosphate. The enzyme catalyses 1,2-dioctanoyl-sn-glycero-3-phospho-(1-D-myo-inositol-3-phosphate) + H2O = 1,2-dioctanoyl-sn-glycero-3-phospho-(1D-myo-inositol) + phosphate. It catalyses the reaction 1,2-dioctanoyl-sn-glycero-3-phospho-(1D-myo-inositol-3,5-bisphosphate) + H2O = 1,2-dioctanoyl-sn-glycero-3-phospho-(1D-myo-inositol-5-phosphate) + phosphate. The catalysed reaction is 1,2-dihexadecanoyl-sn-glycero-3-phospho-(1D-myo-inositol-3,5-phosphate) + H2O = 1,2-dihexadecanoyl-sn-glycero-3-phospho-(1D-myo-inositol-5-phosphate) + phosphate. Allosterically activated by phosphatidylinositol 5-phosphate (PI5P). Lipid phosphatase which dephosphorylates phosphatidylinositol 3-monophosphate (PI3P) and phosphatidylinositol 3,5-bisphosphate (PI(3,5)P2). Has also been shown to dephosphorylate phosphotyrosine- and phosphoserine-containing peptides. Negatively regulates EGFR degradation through regulation of EGFR trafficking from the late endosome to the lysosome. Plays a role in vacuolar formation and morphology. Regulates desmin intermediate filament assembly and architecture. Plays a role in mitochondrial morphology and positioning. Required for skeletal muscle maintenance but not for myogenesis. In skeletal muscles, stabilizes MTMR12 protein levels. This Homo sapiens (Human) protein is Myotubularin.